A 411-amino-acid chain; its full sequence is Probable tRNA pseudouridine synthase D (411 aa).

Asp79 functions as the Nucleophile in the catalytic mechanism. A TRUD domain is found at Gly150 to Ala369.

Belongs to the pseudouridine synthase TruD family.

It catalyses the reaction uridine(13) in tRNA = pseudouridine(13) in tRNA. Functionally, could be responsible for synthesis of pseudouridine from uracil-13 in transfer RNAs. In Thermoplasma acidophilum (strain ATCC 25905 / DSM 1728 / JCM 9062 / NBRC 15155 / AMRC-C165), this protein is Probable tRNA pseudouridine synthase D.